We begin with the raw amino-acid sequence, 338 residues long: UDP-3-O-acylglucosamine N-acyltransferase (338 aa).

His-239 (proton acceptor) is an active-site residue.

The protein belongs to the transferase hexapeptide repeat family. LpxD subfamily. Homotrimer.

It carries out the reaction a UDP-3-O-[(3R)-3-hydroxyacyl]-alpha-D-glucosamine + a (3R)-hydroxyacyl-[ACP] = a UDP-2-N,3-O-bis[(3R)-3-hydroxyacyl]-alpha-D-glucosamine + holo-[ACP] + H(+). It participates in bacterial outer membrane biogenesis; LPS lipid A biosynthesis. In terms of biological role, catalyzes the N-acylation of UDP-3-O-acylglucosamine using 3-hydroxyacyl-ACP as the acyl donor. Is involved in the biosynthesis of lipid A, a phosphorylated glycolipid that anchors the lipopolysaccharide to the outer membrane of the cell. In Xylella fastidiosa (strain M23), this protein is UDP-3-O-acylglucosamine N-acyltransferase.